We begin with the raw amino-acid sequence, 158 residues long: Protein Smg homolog (158 aa).

It belongs to the Smg family.

In Alteromonas mediterranea (strain DSM 17117 / CIP 110805 / LMG 28347 / Deep ecotype), this protein is Protein Smg homolog.